Here is a 415-residue protein sequence, read N- to C-terminus: Ornithine cyclodeaminase (415 aa).

NAD(+) is bound by residues asparagine 241, alanine 242, aspartate 320, threonine 352, leucine 354, histidine 355, aspartate 373, aspartate 396, and valine 397.

Belongs to the AgrE/ArgZ ornithine cyclodeaminase family. NAD(+) is required as a cofactor.

The enzyme catalyses L-ornithine = L-proline + NH4(+). Catalyzes the conversion of ornithine to proline, with the release of ammonia. The chain is Ornithine cyclodeaminase from Methanococcus maripaludis (strain DSM 14266 / JCM 13030 / NBRC 101832 / S2 / LL).